A 515-amino-acid polypeptide reads, in one-letter code: ATP synthase subunit alpha (515 aa).

ATP is bound at residue 171–178 (GDRQTGKT).

The protein belongs to the ATPase alpha/beta chains family. As to quaternary structure, F-type ATPases have 2 components, CF(1) - the catalytic core - and CF(0) - the membrane proton channel. CF(1) has five subunits: alpha(3), beta(3), gamma(1), delta(1), epsilon(1). CF(0) has three main subunits: a(1), b(2) and c(9-12). The alpha and beta chains form an alternating ring which encloses part of the gamma chain. CF(1) is attached to CF(0) by a central stalk formed by the gamma and epsilon chains, while a peripheral stalk is formed by the delta and b chains.

The protein resides in the cell inner membrane. It carries out the reaction ATP + H2O + 4 H(+)(in) = ADP + phosphate + 5 H(+)(out). Produces ATP from ADP in the presence of a proton gradient across the membrane. The alpha chain is a regulatory subunit. The protein is ATP synthase subunit alpha of Xylella fastidiosa (strain M12).